Here is a 570-residue protein sequence, read N- to C-terminus: Protein HEATR9 (570 aa).

The sequence is that of Protein HEATR9 (HEATR9) from Macaca fascicularis (Crab-eating macaque).